A 488-amino-acid chain; its full sequence is MDSIELIPGLPGPGRRLLQLLKDLPSNPSVIVREIPDAIDAFRESITPATRPSCLGLLDTILSCFELPIPTEPIMKALGKLLEPMSWADLKKFGIESYLVTGLEHPSTDVEIFCLHLIRRANWEKKEIGEPLFEAIMACINSRSIAVSEEATVLLFDMADFPYYFNLIIKRFTFVDYEIMNSTLRVRWLTLFAKLSTKSPEYLEELIKDDKLVINGDNKDILLQINFVDVLGIMLEAPFTYEYISSEKTKYLDTIAQDYKGSADSYTDHIGLKFLPRLCELHPDAINSLDEKHQLFDAVRERMKTNDATSILLYGVFLSNTVVTQALIKKYGIEDEANRYVPRWLTRRFLMDEPGMSSFAHALLQPDHNLWMQLWRILPPNTLSTLVNTASSPIPRSRQLAYQCLLHIAQNSPIQIASEGFAIRHLLEAEGDHETCLLRFQVLKTMMESPHGGPKLPFGRYREDILKRLQQGPIVSGASTLKVAAETA.

The protein resides in the cytoplasm. Its subcellular location is the nucleus. This is an uncharacterized protein from Schizosaccharomyces pombe (strain 972 / ATCC 24843) (Fission yeast).